A 100-amino-acid polypeptide reads, in one-letter code: Small ribosomal subunit protein uS14c (100 aa).

This sequence belongs to the universal ribosomal protein uS14 family. In terms of assembly, part of the 30S ribosomal subunit.

It is found in the plastid. Its subcellular location is the chloroplast. In terms of biological role, binds 16S rRNA, required for the assembly of 30S particles. This is Small ribosomal subunit protein uS14c from Porphyra purpurea (Red seaweed).